A 158-amino-acid polypeptide reads, in one-letter code: Placenta growth factor (158 aa).

Positions 1–18 are cleaved as a signal peptide; the sequence is MLVMKLFTCFLQVLAGLA. 2 N-linked (GlcNAc...) asparagine glycosylation sites follow: Asn-29 and Asn-30. 3 cysteine pairs are disulfide-bonded: Cys-48/Cys-90, Cys-79/Cys-125, and Cys-83/Cys-127. An N-linked (GlcNAc...) asparagine glycan is attached at Asn-97. The segment at 136-158 is disordered; that stretch reads AERRKTKGKRKRSRNSQTEEPHP. The segment covering 137 to 149 has biased composition (basic residues); sequence ERRKTKGKRKRSR.

The protein belongs to the PDGF/VEGF growth factor family. Antiparallel homodimer; disulfide-linked. Also found as heterodimer with VEGFA/VEGF.

The protein resides in the secreted. Its function is as follows. Growth factor active in angiogenesis and endothelial cell growth, stimulating their proliferation and migration. It binds to the receptor FLT1/VEGFR-1. Also promotes cell tumor growth. This chain is Placenta growth factor (Pgf), found in Mus musculus (Mouse).